Consider the following 488-residue polypeptide: Palmitoleoyl-protein carboxylesterase notum1' (488 aa).

Residues 1–19 form the signal peptide; the sequence is MAGTLCVTLLLLLSTIAVG. N90 is a glycosylation site (N-linked (GlcNAc...) asparagine). Active-site charge relay system residues include S226, D334, and H383.

Belongs to the pectinacetylesterase family. Notum subfamily. In terms of tissue distribution, expressed in the egg and through cleavage to gastrulation stages. Enriched in the animal (prospective ectoderm) and dorsal regions in early gastrula. Shows a dynamic expression during embryogenesis, in particular during neural induction and antero-posterior (AP) patterning.

The protein localises to the secreted. It carries out the reaction [Wnt protein]-O-(9Z)-hexadecenoyl-L-serine + H2O = [Wnt protein]-L-serine + (9Z)-hexadecenoate + H(+). In terms of biological role, carboxylesterase that acts as a key negative regulator of the Wnt signaling pathway by specifically mediating depalmitoleoylation of WNT proteins. Serine palmitoleoylation of WNT proteins is required for efficient binding to frizzled receptors. Functions in the prospective ectoderm and is required for neural induction. The sequence is that of Palmitoleoyl-protein carboxylesterase notum1' from Xenopus laevis (African clawed frog).